The chain runs to 297 residues: GTPase Era (297 aa).

Residues 7-174 (HSGFVSIIGR…VQVVRDLLPE (168 aa)) form the Era-type G domain. Residues 15 to 22 (GRPNVGKS) are G1. 15–22 (GRPNVGKS) provides a ligand contact to GTP. The segment at 41 to 45 (QTTRN) is G2. The segment at 62 to 65 (DTPG) is G3. Residues 62-66 (DTPGI) and 124-127 (NKVD) each bind GTP. Positions 124 to 127 (NKVD) are G4. Positions 153–155 (VSA) are G5. The KH type-2 domain occupies 205–282 (THDEVPYSVA…FLELFVRVSR (78 aa)).

It belongs to the TRAFAC class TrmE-Era-EngA-EngB-Septin-like GTPase superfamily. Era GTPase family. As to quaternary structure, monomer.

The protein resides in the cytoplasm. The protein localises to the cell inner membrane. In terms of biological role, an essential GTPase that binds both GDP and GTP, with rapid nucleotide exchange. Plays a role in 16S rRNA processing and 30S ribosomal subunit biogenesis and possibly also in cell cycle regulation and energy metabolism. This chain is GTPase Era, found in Geotalea daltonii (strain DSM 22248 / JCM 15807 / FRC-32) (Geobacter daltonii).